The primary structure comprises 442 residues: Probable carboxypeptidase PABG_01461 (442 aa).

A signal peptide spans 1-20; sequence MKLQYLVALLSVQAVPPVTA. An N-linked (GlcNAc...) asparagine glycan is attached at asparagine 102. Aspartate 160 contributes to the Zn(2+) binding site. The Proton acceptor role is filled by glutamate 192. Glutamate 193 provides a ligand contact to Zn(2+). Asparagine 343 is a glycosylation site (N-linked (GlcNAc...) asparagine).

It belongs to the peptidase M20A family. Zn(2+) serves as cofactor.

The protein resides in the secreted. This is Probable carboxypeptidase PABG_01461 from Paracoccidioides brasiliensis (strain Pb03).